The sequence spans 424 residues: Putative chloroquine resistance transporter (424 aa).

Topologically, residues 1 to 56 are cytoplasmic; sequence MTVIKKGKNKKKNLKNDDRYKELDSLITNGSEIGDNSGRSCIKRFFKIIGNEMKNN. Residues 57 to 77 traverse the membrane as a helical segment; sequence VYVYFLSILYLCVCVMNKVFA. Over 78-88 the chain is Vacuolar; it reads KRTLNKMGNYS. Asparagine 86 is a glycosylation site (N-linked (GlcNAc...) asparagine). A helical transmembrane segment spans residues 89-109; sequence FVTSETHNIICIVVFQLLYFI. Residues 110-125 lie on the Cytoplasmic side of the membrane; it reads YRKTSTSGYKNESQKN. A helical membrane pass occupies residues 126–146; it reads FGWQFFLISLLDASTVIISMI. At 147–156 the chain is on the vacuolar side; the sequence is GLTRTTGNIQ. The chain crosses the membrane as a helical span at residues 157–177; that stretch reads SFIMQLIIPVNMYFCFMFLGY. At 178-180 the chain is on the cytoplasmic side; the sequence is RYH. Residues 181–201 traverse the membrane as a helical segment; the sequence is LFNYLGAFIILITIAVVETFL. Residues 202–209 lie on the Vacuolar side of the membrane; the sequence is SFETQSEN. Residues 210–230 traverse the membrane as a helical segment; the sequence is SIIFNLIMISALIPLSFSNMT. Topologically, residues 231–248 are cytoplasmic; that stretch reads REVVFKKHKINILRLNAM. The chain crosses the membrane as a helical span at residues 249–269; the sequence is VVLFQFFTSLLVLPVYNIPFL. Residues 270–317 lie on the Vacuolar side of the membrane; sequence KEIYMPFSEMSTNINNGLRCLFYGQNTVVENCGVGMVKMCDNCEGAWK. 2 disulfides stabilise this stretch: cysteine 289-cysteine 312 and cysteine 301-cysteine 309. The helical transmembrane segment at 318-338 threads the bilayer; that stretch reads TFITFSFFNICDNLLACYIID. Over 339–346 the chain is Cytoplasmic; sequence KFSTMTYT. A helical membrane pass occupies residues 347–367; that stretch reads IVSCIQGPAITIAYYFKFLAG. Topologically, residues 368–377 are vacuolar; that stretch reads DAVRKPRILD. Residues 378–398 traverse the membrane as a helical segment; it reads FLTLFGYLFGTIIYRIGNIIL. At 399-424 the chain is on the cytoplasmic side; it reads EKKKMVKSQNSNDSEAELTCIETSTA.

Belongs to the CRT-like transporter family.

It localises to the vacuole membrane. In terms of biological role, nutrient transporter. Involved in maintaining the osmotic homeostasis of the digestive vacuole. This is Putative chloroquine resistance transporter from Plasmodium yoelii yoelii.